A 254-amino-acid chain; its full sequence is 3-deoxy-manno-octulosonate cytidylyltransferase (254 aa).

It belongs to the KdsB family.

Its subcellular location is the cytoplasm. The catalysed reaction is 3-deoxy-alpha-D-manno-oct-2-ulosonate + CTP = CMP-3-deoxy-beta-D-manno-octulosonate + diphosphate. It functions in the pathway nucleotide-sugar biosynthesis; CMP-3-deoxy-D-manno-octulosonate biosynthesis; CMP-3-deoxy-D-manno-octulosonate from 3-deoxy-D-manno-octulosonate and CTP: step 1/1. It participates in bacterial outer membrane biogenesis; lipopolysaccharide biosynthesis. Activates KDO (a required 8-carbon sugar) for incorporation into bacterial lipopolysaccharide in Gram-negative bacteria. This is 3-deoxy-manno-octulosonate cytidylyltransferase from Tolumonas auensis (strain DSM 9187 / NBRC 110442 / TA 4).